We begin with the raw amino-acid sequence, 94 residues long: C-C motif chemokine 26 (94 aa).

Residues 1–23 (MMGLSLASAVLLASLLSLHLGTA) form the signal peptide. Intrachain disulfides connect Cys33/Cys57 and Cys34/Cys73.

Belongs to the intercrine beta (chemokine CC) family. Monomer. As to expression, ubiquitously expressed at low levels in various tissues including heart and ovary.

The protein localises to the secreted. Chemoattractant for eosinophils and basophils. Acts as a ligand for C-C chemokine receptor CCR3 which triggers Ca(2+) mobilization in eosinophils. Also acts as a ligand for CX3C chemokine receptor CX3CR1, inducing cell chemotaxis. In Homo sapiens (Human), this protein is C-C motif chemokine 26.